Reading from the N-terminus, the 100-residue chain is uncharacterized protein (100 aa).

The N-terminal stretch at 1–17 (MTMKYFCSVMIAIALVG) is a signal peptide. Residue Cys-18 is the site of N-palmitoyl cysteine attachment. Residue Cys-18 is the site of S-diacylglycerol cysteine attachment.

It localises to the cell membrane. This is an uncharacterized protein from Salmonella paratyphi A (strain ATCC 9150 / SARB42).